A 146-amino-acid chain; its full sequence is Large ribosomal subunit protein uL15 (146 aa).

Positions 1-56 are disordered; the sequence is MKLHELKAAEGANKASKRVGRGTGSGLGKTSGRGQNGQNSRSGGGVRPGFEGGQMP. Gly residues-rich tracts occupy residues 21–35 and 42–52; these read RGTG…GRGQ and SGGGVRPGFEG.

This sequence belongs to the universal ribosomal protein uL15 family. As to quaternary structure, part of the 50S ribosomal subunit.

Its function is as follows. Binds to the 23S rRNA. The chain is Large ribosomal subunit protein uL15 from Clostridium botulinum (strain ATCC 19397 / Type A).